The following is a 266-amino-acid chain: Putative pyruvate, phosphate dikinase regulatory protein (266 aa).

149-156 is a binding site for ADP; it reads GVSRTSKT.

It belongs to the pyruvate, phosphate/water dikinase regulatory protein family. PDRP subfamily.

The enzyme catalyses N(tele)-phospho-L-histidyl/L-threonyl-[pyruvate, phosphate dikinase] + ADP = N(tele)-phospho-L-histidyl/O-phospho-L-threonyl-[pyruvate, phosphate dikinase] + AMP + H(+). It carries out the reaction N(tele)-phospho-L-histidyl/O-phospho-L-threonyl-[pyruvate, phosphate dikinase] + phosphate + H(+) = N(tele)-phospho-L-histidyl/L-threonyl-[pyruvate, phosphate dikinase] + diphosphate. Functionally, bifunctional serine/threonine kinase and phosphorylase involved in the regulation of the pyruvate, phosphate dikinase (PPDK) by catalyzing its phosphorylation/dephosphorylation. In Geobacillus sp. (strain WCH70), this protein is Putative pyruvate, phosphate dikinase regulatory protein.